Here is a 104-residue protein sequence, read N- to C-terminus: Holotricin-3 (104 aa).

Positions 1 to 20 are cleaved as a signal peptide; it reads MNKLIILGLACIIAVASAMP. A disordered region spans residues 22-104; sequence GPGDGHGGGH…HHGGYQTHGY (83 aa). Residues 23–97 are compositionally biased toward gly residues; that stretch reads PGDGHGGGHG…PGGHGGGHHG (75 aa). 18 tandem repeats follow at residues 27 to 30, 31 to 34, 35 to 38, 39 to 42, 43 to 46, 47 to 50, 51 to 54, 55 to 58, 59 to 62, 63 to 66, 67 to 70, 71 to 74, 75 to 78, 79 to 82, 83 to 86, 87 to 90, 91 to 94, and 96 to 98. Positions 27–98 are 18 X 4 AA approximate tandem repeats of H-G-G-G; it reads HGGGHGGGHG…GGHGGGHHGG (72 aa).

To T.molitor tenecin 3.

It is found in the secreted. Has antifungal activity against C.albicans. This Holotrichia diomphalia (Korean black chafer) protein is Holotricin-3.